The chain runs to 247 residues: Sugar fermentation stimulation protein homolog (247 aa).

The protein belongs to the SfsA family.

This chain is Sugar fermentation stimulation protein homolog, found in Methylorubrum populi (strain ATCC BAA-705 / NCIMB 13946 / BJ001) (Methylobacterium populi).